A 239-amino-acid chain; its full sequence is Probable replication-associated protein repA2 (239 aa).

This sequence belongs to the IncFII RepA family.

This protein is essential for plasmid replication; it is involved in copy control functions. The protein is Probable replication-associated protein repA2 (repA2) of Buchnera aphidicola subsp. Baizongia pistaciae (strain Bp).